The following is a 279-amino-acid chain: NADPH-dependent 7-cyano-7-deazaguanine reductase (279 aa).

86-88 lines the substrate pocket; that stretch reads IES. An NADPH-binding site is contributed by 88 to 89; sequence SK. Cysteine 187 acts as the Thioimide intermediate in catalysis. Aspartate 194 functions as the Proton donor in the catalytic mechanism. Position 226 to 227 (226 to 227) interacts with substrate; it reads HE. 255-256 contacts NADPH; sequence RG.

It belongs to the GTP cyclohydrolase I family. QueF type 2 subfamily. Homodimer.

It is found in the cytoplasm. It catalyses the reaction 7-aminomethyl-7-carbaguanine + 2 NADP(+) = 7-cyano-7-deazaguanine + 2 NADPH + 3 H(+). Its pathway is tRNA modification; tRNA-queuosine biosynthesis. In terms of biological role, catalyzes the NADPH-dependent reduction of 7-cyano-7-deazaguanine (preQ0) to 7-aminomethyl-7-deazaguanine (preQ1). In Haemophilus influenzae (strain PittEE), this protein is NADPH-dependent 7-cyano-7-deazaguanine reductase.